We begin with the raw amino-acid sequence, 154 residues long: 6,7-dimethyl-8-ribityllumazine synthase (154 aa).

5-amino-6-(D-ribitylamino)uracil is bound by residues Phe-22, 56 to 58 (AFE), and 80 to 82 (AVI). A (2S)-2-hydroxy-3-oxobutyl phosphate-binding site is contributed by 85–86 (ET). The active-site Proton donor is His-88. Phe-113 lines the 5-amino-6-(D-ribitylamino)uracil pocket. Arg-127 contributes to the (2S)-2-hydroxy-3-oxobutyl phosphate binding site.

Belongs to the DMRL synthase family.

The enzyme catalyses (2S)-2-hydroxy-3-oxobutyl phosphate + 5-amino-6-(D-ribitylamino)uracil = 6,7-dimethyl-8-(1-D-ribityl)lumazine + phosphate + 2 H2O + H(+). The protein operates within cofactor biosynthesis; riboflavin biosynthesis; riboflavin from 2-hydroxy-3-oxobutyl phosphate and 5-amino-6-(D-ribitylamino)uracil: step 1/2. Functionally, catalyzes the formation of 6,7-dimethyl-8-ribityllumazine by condensation of 5-amino-6-(D-ribitylamino)uracil with 3,4-dihydroxy-2-butanone 4-phosphate. This is the penultimate step in the biosynthesis of riboflavin. This is 6,7-dimethyl-8-ribityllumazine synthase from Thermoanaerobacter sp. (strain X514).